The sequence spans 448 residues: Mitochondrial distribution and morphology protein 10 (448 aa).

The protein belongs to the MDM10 family. Component of the ER-mitochondria encounter structure (ERMES) or MDM complex, composed of MMM1, MDM10, MDM12 and MDM34. Associates with the mitochondrial outer membrane sorting assembly machinery SAM(core) complex.

It localises to the mitochondrion outer membrane. Functionally, component of the ERMES/MDM complex, which serves as a molecular tether to connect the endoplasmic reticulum and mitochondria. Components of this complex are involved in the control of mitochondrial shape and protein biogenesis and may function in phospholipid exchange. MDM10 is involved in the late assembly steps of the general translocase of the mitochondrial outer membrane (TOM complex). Functions in the TOM40-specific route of the assembly of outer membrane beta-barrel proteins, including the association of TOM40 with the receptor TOM22 and small TOM proteins. Can associate with the SAM(core) complex as well as the MDM12-MMM1 complex, both involved in late steps of the major beta-barrel assembly pathway, that is responsible for biogenesis of all outer membrane beta-barrel proteins. May act as a switch that shuttles between both complexes and channels precursor proteins into the TOM40-specific pathway. Plays a role in mitochondrial morphology and in the inheritance of mitochondria. In Podospora anserina (strain S / ATCC MYA-4624 / DSM 980 / FGSC 10383) (Pleurage anserina), this protein is Mitochondrial distribution and morphology protein 10.